The following is a 54-amino-acid chain: Large ribosomal subunit protein bL33 (54 aa).

This sequence belongs to the bacterial ribosomal protein bL33 family.

In Corynebacterium urealyticum (strain ATCC 43042 / DSM 7109), this protein is Large ribosomal subunit protein bL33.